A 167-amino-acid chain; its full sequence is Putative peroxiredoxin-A (167 aa).

The 164-residue stretch at 4–167 folds into the Thioredoxin domain; the sequence is IKRGDRFPTT…STAQKIIAKL (164 aa). C53 functions as the Cysteine sulfenic acid (-SOH) intermediate in the catalytic mechanism. The Microbody targeting signal signature appears at 165–167; it reads AKL.

It belongs to the peroxiredoxin family. Prx5 subfamily.

The protein resides in the peroxisome membrane. It carries out the reaction a hydroperoxide + [thioredoxin]-dithiol = an alcohol + [thioredoxin]-disulfide + H2O. In terms of biological role, thiol-specific peroxidase that catalyzes the reduction of hydrogen peroxide and organic hydroperoxides to water and alcohols, respectively. Plays a role in cell protection against oxidative stress by detoxifying peroxides and as sensor of hydrogen peroxide-mediated signaling events. The polypeptide is Putative peroxiredoxin-A (PMPA) (Candida boidinii (Yeast)).